We begin with the raw amino-acid sequence, 230 residues long: UPF0173 metal-dependent hydrolase Acid_3917 (230 aa).

It belongs to the UPF0173 family.

The polypeptide is UPF0173 metal-dependent hydrolase Acid_3917 (Solibacter usitatus (strain Ellin6076)).